The following is a 371-amino-acid chain: MSLEPFIDSKPFTFGVELEMQIVNTHDYDLTKAGSDLLRLIKDEKIPGNITPEITESMIELSTGICTTHEQAVADLRKIRDTLVSAADHLNVGLCGGGTHAFQQWSERQIVDTPRFQYLSELYGYLAKQFTVFGQHVHIGCPDPNSALYLLHSMSRFIPHFIALSASSPFVQGVDTGFHSARLNSVFAFPLSGRAPFVLTWDSFEEYFSKMVHTGVVNSMKDFYWDIRPKPGFGTIEVRVMDTPLSVDRAAAIACYIQTLARHLLLDKPISPKEDDYLVYTFNRFEACRFGLAGTCINPQTGERKTISEDILETLDRIAPHAEALGSGNALAEIGAIARSQVNDATWLRGVVEREKSLHEAVRQQCLEWRA.

This sequence belongs to the glutamate--cysteine ligase type 2 family. YbdK subfamily.

The catalysed reaction is L-cysteine + L-glutamate + ATP = gamma-L-glutamyl-L-cysteine + ADP + phosphate + H(+). Its function is as follows. ATP-dependent carboxylate-amine ligase which exhibits weak glutamate--cysteine ligase activity. This Paraburkholderia xenovorans (strain LB400) protein is Putative glutamate--cysteine ligase 2.